A 73-amino-acid polypeptide reads, in one-letter code: uncharacterized protein (73 aa).

This is an uncharacterized protein from Caprine arthritis encephalitis virus (CAEV).